The following is a 75-amino-acid chain: Small capsomere-interacting protein (75 aa).

The protein belongs to the herpesviridae small capsomere-interacting protein family. Interacts with the major capsid protein/MCP.

It localises to the virion. Its subcellular location is the host nucleus. Participates in the assembly of the infectious particles by decorating the outer surface of the capsid shell and thus forming a layer between the capsid and the tegument. Complexes composed of the major capsid protein and small capsomere-interacting protein/SCP assemble together in the host cytoplasm and are translocated to the nucleus, where they accumulate and participate in capsid assembly. The chain is Small capsomere-interacting protein from Homo sapiens (Human).